A 342-amino-acid polypeptide reads, in one-letter code: MSAFTPASEVLLRHSDDFEQSRILFAGDLQDDLPALFECAASRAHTQQFHHWQVLSRQMGDNVRFSLVAQASDVADCDTLIYYWPKNKPEAQFQLMNILSLMPSGSDVFVVGENRSGVRSAEQMLADYAPLNKVDSARRCGLYHGRLEKQPQFSLESWWAEYNIDGLTIKTLPGVFSRDGLDVGSQLLLSTLTPHTKGKVLDVGCGAGVLSAALASHSPKARLTLCDVSAPAVEASRATLAANGLEGEVFASNVFSEVKGRFDMIISNPPFHDGMQTSLDAAQTLIRGAVRHLNSGGELRIVANAFLPYPKILDETFGFHEVIAQTGRFKVYRTVMTRQAKK.

Belongs to the methyltransferase superfamily. RsmC family. In terms of assembly, monomer.

Its subcellular location is the cytoplasm. The catalysed reaction is guanosine(1207) in 16S rRNA + S-adenosyl-L-methionine = N(2)-methylguanosine(1207) in 16S rRNA + S-adenosyl-L-homocysteine + H(+). Specifically methylates the guanine in position 1207 of 16S rRNA in the 30S particle. This chain is Ribosomal RNA small subunit methyltransferase C, found in Salmonella choleraesuis (strain SC-B67).